An 83-amino-acid chain; its full sequence is Neurotoxin 3FTx-RI (83 aa).

An N-terminal signal peptide occupies residues 1–21; it reads MKTLLLTLVVLTIVCLDLGHT. Disulfide bonds link Cys24–Cys45, Cys38–Cys62, Cys64–Cys75, and Cys76–Cys81.

Belongs to the three-finger toxin family. Short-chain subfamily. Type I alpha-neurotoxin sub-subfamily. In terms of tissue distribution, expressed by the venom gland.

The protein localises to the secreted. Functionally, binds to muscle nicotinic acetylcholine receptor (nAChR) and inhibit acetylcholine from binding to the receptor, thereby impairing neuromuscular transmission. The polypeptide is Neurotoxin 3FTx-RI (Bungarus fasciatus (Banded krait)).